Here is a 360-residue protein sequence, read N- to C-terminus: Outer membrane protein P2 (360 aa).

The N-terminal stretch at 1-20 is a signal peptide; it reads MKKTLAALIVGAFAASAANA.

The protein belongs to the Gram-negative porin family. In terms of assembly, homotrimer.

The protein resides in the cell outer membrane. Forms pores that allow passive diffusion of small molecules across the outer membrane. The protein is Outer membrane protein P2 (ompP2) of Haemophilus influenzae.